The sequence spans 386 residues: 8-amino-7-oxononanoate synthase (386 aa).

The substrate site is built by Arg-22 and Arg-29. 109–110 (GY) is a binding site for pyridoxal 5'-phosphate. His-134 contacts substrate. Pyridoxal 5'-phosphate-binding positions include Ser-182, 207-210 (DDAH), and 237-240 (TLSK). At Lys-240 the chain carries N6-(pyridoxal phosphate)lysine. Residue Thr-349 participates in substrate binding.

It belongs to the class-II pyridoxal-phosphate-dependent aminotransferase family. BioF subfamily. In terms of assembly, homodimer. Pyridoxal 5'-phosphate serves as cofactor.

The catalysed reaction is 6-carboxyhexanoyl-[ACP] + L-alanine + H(+) = (8S)-8-amino-7-oxononanoate + holo-[ACP] + CO2. Its pathway is cofactor biosynthesis; biotin biosynthesis. Its function is as follows. Catalyzes the decarboxylative condensation of pimeloyl-[acyl-carrier protein] and L-alanine to produce 8-amino-7-oxononanoate (AON), [acyl-carrier protein], and carbon dioxide. The polypeptide is 8-amino-7-oxononanoate synthase (Beijerinckia indica subsp. indica (strain ATCC 9039 / DSM 1715 / NCIMB 8712)).